Reading from the N-terminus, the 235-residue chain is MTDLTEKNTALEEEKIESAVENQQKSIWKEIFAQGIWKNNPAVVQLLGLCPLLAVSSTATNALGLGLATMLVLTCTNTVISLFRQYIPKEIRIPIYVMIIATTVTAVQLLMNAYTYTLYQSLGIFIPLIVTNCIIIGRAEAFASKNSLLHSIWDGFSMGLGMALSLTILGALREIIGQGTIFEGIENLFGEQAKFLTHHIYHTDSSFLLFILPPGAFIGLGLLLAIKNRIDNIKK.

Helical transmembrane passes span 63–83 (LGLG…ISLF), 93–113 (IPIY…LMNA), 117–137 (TLYQ…IIIG), 152–172 (IWDG…LGAL), and 206–226 (SFLL…LLAI).

This sequence belongs to the NqrDE/RnfAE family. In terms of assembly, the complex is composed of six subunits: RnfA, RnfB, RnfC, RnfD, RnfE and RnfG.

The protein localises to the cell inner membrane. In terms of biological role, part of a membrane-bound complex that couples electron transfer with translocation of ions across the membrane. This is Ion-translocating oxidoreductase complex subunit E from Haemophilus influenzae (strain ATCC 51907 / DSM 11121 / KW20 / Rd).